The sequence spans 294 residues: ATP phosphoribosyltransferase (294 aa).

Belongs to the ATP phosphoribosyltransferase family. Long subfamily. It depends on Mg(2+) as a cofactor.

Its subcellular location is the cytoplasm. It carries out the reaction 1-(5-phospho-beta-D-ribosyl)-ATP + diphosphate = 5-phospho-alpha-D-ribose 1-diphosphate + ATP. It participates in amino-acid biosynthesis; L-histidine biosynthesis; L-histidine from 5-phospho-alpha-D-ribose 1-diphosphate: step 1/9. Its activity is regulated as follows. Feedback inhibited by histidine. Its function is as follows. Catalyzes the condensation of ATP and 5-phosphoribose 1-diphosphate to form N'-(5'-phosphoribosyl)-ATP (PR-ATP). Has a crucial role in the pathway because the rate of histidine biosynthesis seems to be controlled primarily by regulation of HisG enzymatic activity. This is ATP phosphoribosyltransferase from Chlorobium phaeovibrioides (strain DSM 265 / 1930) (Prosthecochloris vibrioformis (strain DSM 265)).